The following is a 72-amino-acid chain: Large ribosomal subunit protein bL31c (72 aa).

It belongs to the bacterial ribosomal protein bL31 family. Type A subfamily. Part of the 50S ribosomal subunit.

The protein localises to the plastid. It localises to the chloroplast. Functionally, binds the 23S rRNA. The polypeptide is Large ribosomal subunit protein bL31c (Trieres chinensis (Marine centric diatom)).